A 441-amino-acid chain; its full sequence is Glutamate-1-semialdehyde 2,1-aminomutase (441 aa).

Lys-275 carries the N6-(pyridoxal phosphate)lysine modification.

It belongs to the class-III pyridoxal-phosphate-dependent aminotransferase family. HemL subfamily. Homodimer. The cofactor is pyridoxal 5'-phosphate.

It localises to the cytoplasm. The enzyme catalyses (S)-4-amino-5-oxopentanoate = 5-aminolevulinate. It participates in porphyrin-containing compound metabolism; protoporphyrin-IX biosynthesis; 5-aminolevulinate from L-glutamyl-tRNA(Glu): step 2/2. The protein is Glutamate-1-semialdehyde 2,1-aminomutase of Deinococcus deserti (strain DSM 17065 / CIP 109153 / LMG 22923 / VCD115).